A 192-amino-acid chain; its full sequence is Imidazoleglycerol-phosphate dehydratase (192 aa).

Belongs to the imidazoleglycerol-phosphate dehydratase family.

The protein resides in the cytoplasm. It carries out the reaction D-erythro-1-(imidazol-4-yl)glycerol 3-phosphate = 3-(imidazol-4-yl)-2-oxopropyl phosphate + H2O. Its pathway is amino-acid biosynthesis; L-histidine biosynthesis; L-histidine from 5-phospho-alpha-D-ribose 1-diphosphate: step 6/9. This is Imidazoleglycerol-phosphate dehydratase from Carboxydothermus hydrogenoformans (strain ATCC BAA-161 / DSM 6008 / Z-2901).